The following is a 345-amino-acid chain: NADH-ubiquinone oxidoreductase chain 2 (345 aa).

10 helical membrane passes run 3 to 23 (PYIL…TFAS), 25 to 45 (NWLL…PLMA), 59 to 79 (YFIT…INAW), 95 to 115 (ALMT…FWLP), 148 to 168 (LMPE…GWGG), 177 to 196 (IMAY…MHFM), 201 to 223 (IINL…TLNS), 236 to 256 (FPAL…LPPL), 273 to 293 (NLAL…YFYL), and 322 to 342 (FILP…PSII).

This sequence belongs to the complex I subunit 2 family.

It is found in the mitochondrion inner membrane. The catalysed reaction is a ubiquinone + NADH + 5 H(+)(in) = a ubiquinol + NAD(+) + 4 H(+)(out). In terms of biological role, core subunit of the mitochondrial membrane respiratory chain NADH dehydrogenase (Complex I) that is believed to belong to the minimal assembly required for catalysis. Complex I functions in the transfer of electrons from NADH to the respiratory chain. The immediate electron acceptor for the enzyme is believed to be ubiquinone. The polypeptide is NADH-ubiquinone oxidoreductase chain 2 (MT-ND2) (Polypterus ornatipinnis (Ornate bichir)).